A 296-amino-acid chain; its full sequence is 33 kDa chaperonin (296 aa).

Disulfide bonds link Cys236–Cys238 and Cys269–Cys272.

Belongs to the HSP33 family. In terms of processing, under oxidizing conditions two disulfide bonds are formed involving the reactive cysteines. Under reducing conditions zinc is bound to the reactive cysteines and the protein is inactive.

The protein resides in the cytoplasm. Redox regulated molecular chaperone. Protects both thermally unfolding and oxidatively damaged proteins from irreversible aggregation. Plays an important role in the bacterial defense system toward oxidative stress. This Lactobacillus acidophilus (strain ATCC 700396 / NCK56 / N2 / NCFM) protein is 33 kDa chaperonin.